The following is a 240-amino-acid chain: Poxin (240 aa).

His-46 (proton donor) is an active-site residue. The active-site Shared with catalytic histidine of dimeric partner is the Tyr-181. Lys-185 functions as the Proton acceptor; shared with catalytic histidine of dimeric partner in the catalytic mechanism.

The protein belongs to the poxin family. Homodimer.

The catalysed reaction is 2',3'-cGAMP + H2O = Gp(2'-5')Ap(3') + H(+). Functionally, nuclease that cleaves host 2',3'-cGAMP. This Lepidoptera (butterflies and moths) protein is Poxin (P26).